A 415-amino-acid polypeptide reads, in one-letter code: Probable cytosolic iron-sulfur protein assembly protein 1 (415 aa).

A WD 1 repeat occupies 9–48 (AHDDKVWSLSSHPTLPLLATASTDKCSNIYRLSCSNASSS). A disordered region spans residues 45-70 (ASSSSSSSSPPSPPSPPSSSSPRRNF). Positions 54–63 (PPSPPSPPSS) are enriched in pro residues. 6 WD repeats span residues 79 to 131 (THRR…DDNT), 160 to 200 (GHEN…EEFE), 207 to 246 (DHTQ…DEWS), 253 to 300 (GHEG…GFNG), 335 to 374 (IHTH…WEVE), and 380 to 415 (AHGV…IWEV).

The protein belongs to the WD repeat CIA1 family. Interacts with NAR1.

The protein localises to the cytoplasm. Its subcellular location is the nucleus. Essential component of the cytosolic iron-sulfur (Fe/S) protein assembly machinery. Required for the maturation of extramitochondrial Fe/S proteins. The protein is Probable cytosolic iron-sulfur protein assembly protein 1 of Lodderomyces elongisporus (strain ATCC 11503 / CBS 2605 / JCM 1781 / NBRC 1676 / NRRL YB-4239) (Yeast).